The sequence spans 549 residues: Cell pattern formation-associated protein StuA (549 aa).

The HTH APSES-type domain maps to arginine 86–proline 192. Residues glycine 120 to glutamate 141 constitute a DNA-binding region (H-T-H motif). Disordered stretches follow at residues alanine 205–isoleucine 227, serine 246–arginine 288, arginine 332–asparagine 466, and alanine 514–glycine 549. A compositionally biased stretch (polar residues) spans serine 246–glutamine 266. 3 stretches are compositionally biased toward basic and acidic residues: residues arginine 278–arginine 288, arginine 332–histidine 346, and arginine 385–serine 395. Positions threonine 516–glutamine 545 are nuclear localization domain. Low complexity predominate over residues alanine 532–glycine 549.

Belongs to the EFG1/PHD1/stuA family.

The protein resides in the nucleus. Its function is as follows. Transcription factor that regulates asexual reproduction. Binds the StuA-response elements (StRE) with the consensus sequence 5'-(A/T)CGCG(T/A)N(A/C)-3' at the promoters of target genes. This chain is Cell pattern formation-associated protein StuA, found in Gibberella moniliformis (strain M3125 / FGSC 7600) (Maize ear and stalk rot fungus).